The sequence spans 648 residues: Penicillin-binding protein PbpB (648 aa).

Positions 1–35 are disordered; that stretch reads MSRRGDRPRTPAQPRKKARVDQPRSARTRRTRVSE. Residues 52–72 traverse the membrane as a helical segment; the sequence is GNLAILAVLVIAAVQLFMLQV. Residue Ser355 is the Acyl-ester intermediate of the active site.

Belongs to the transpeptidase family. Interacts with Wag31.

It is found in the cell membrane. This is Penicillin-binding protein PbpB (pbpB) from Mycolicibacterium smegmatis (strain ATCC 700084 / mc(2)155) (Mycobacterium smegmatis).